We begin with the raw amino-acid sequence, 860 residues long: DNA mismatch repair protein MutS (860 aa).

625-632 (GPNMGGKS) contacts ATP.

It belongs to the DNA mismatch repair MutS family.

Functionally, this protein is involved in the repair of mismatches in DNA. It is possible that it carries out the mismatch recognition step. This protein has a weak ATPase activity. The protein is DNA mismatch repair protein MutS of Aeromonas hydrophila subsp. hydrophila (strain ATCC 7966 / DSM 30187 / BCRC 13018 / CCUG 14551 / JCM 1027 / KCTC 2358 / NCIMB 9240 / NCTC 8049).